The sequence spans 608 residues: Developmental regulatory protein wetA (608 aa).

7 disordered regions span residues Ala54–Thr88, Val102–Arg125, Val146–Lys186, Ser202–Arg226, Trp309–Pro352, Ala447–Gly544, and Leu556–Ala576. Low complexity-rich tracts occupy residues Glu77–Thr88, Pro107–Ser119, and Ser163–Ser175. Positions Gln313–Pro338 are enriched in basic residues. Low complexity-rich tracts occupy residues His339 to Ala350 and Ser502 to Gly517.

Belongs to the wetA family.

In terms of biological role, abaA and wetA are pivotal regulators of conidiophore development and conidium maturation. They act individually and together to regulate their own expression and that of numerous other sporulation-specific genes. Functions to maintain conidial dormancy by suppressing microcycle conidiation. The chain is Developmental regulatory protein wetA from Gibberella zeae (strain ATCC MYA-4620 / CBS 123657 / FGSC 9075 / NRRL 31084 / PH-1) (Wheat head blight fungus).